We begin with the raw amino-acid sequence, 306 residues long: Agmatinase (306 aa).

Mn(2+)-binding residues include histidine 126, aspartate 149, histidine 151, aspartate 153, aspartate 230, and aspartate 232.

The protein belongs to the arginase family. Agmatinase subfamily. Requires Mn(2+) as cofactor.

It carries out the reaction agmatine + H2O = urea + putrescine. Its pathway is amine and polyamine biosynthesis; putrescine biosynthesis via agmatine pathway; putrescine from agmatine: step 1/1. In terms of biological role, catalyzes the formation of putrescine from agmatine. The chain is Agmatinase from Serratia proteamaculans (strain 568).